We begin with the raw amino-acid sequence, 215 residues long: Large ribosomal subunit protein uL4 (215 aa).

The tract at residues 46–76 (TAKSKNRAEVSGGGRKPWAQKGGGRARAGSI) is disordered. The span at 56-71 (SGGGRKPWAQKGGGRA) shows a compositional bias: gly residues.

This sequence belongs to the universal ribosomal protein uL4 family. In terms of assembly, part of the 50S ribosomal subunit.

In terms of biological role, one of the primary rRNA binding proteins, this protein initially binds near the 5'-end of the 23S rRNA. It is important during the early stages of 50S assembly. It makes multiple contacts with different domains of the 23S rRNA in the assembled 50S subunit and ribosome. Forms part of the polypeptide exit tunnel. The sequence is that of Large ribosomal subunit protein uL4 from Helicobacter acinonychis (strain Sheeba).